A 577-amino-acid chain; its full sequence is Arginine--tRNA ligase (577 aa).

Positions proline 122 to histidine 132 match the 'HIGH' region motif.

Belongs to the class-I aminoacyl-tRNA synthetase family. In terms of assembly, monomer.

The protein localises to the cytoplasm. It catalyses the reaction tRNA(Arg) + L-arginine + ATP = L-arginyl-tRNA(Arg) + AMP + diphosphate. This Klebsiella pneumoniae subsp. pneumoniae (strain ATCC 700721 / MGH 78578) protein is Arginine--tRNA ligase.